The chain runs to 150 residues: Putative pre-16S rRNA nuclease (150 aa).

This sequence belongs to the YqgF nuclease family.

It is found in the cytoplasm. In terms of biological role, could be a nuclease involved in processing of the 5'-end of pre-16S rRNA. This Syntrophus aciditrophicus (strain SB) protein is Putative pre-16S rRNA nuclease.